A 473-amino-acid chain; its full sequence is Mogroside IIIx synthase (473 aa).

Histidine 43 acts as the Proton acceptor in catalysis. The active-site Charge relay is the aspartate 142. Positions 293, 356, 374, 375, 376, 379, 395, and 396 each coordinate UDP-alpha-D-glucose.

Belongs to the UDP-glycosyltransferase family. As to expression, highly expressed in mature fruits.

The enzyme catalyses mogroside IIE + UDP-alpha-D-glucose = mogroside IIIX + UDP + H(+). It catalyses the reaction mogroside III + UDP-alpha-D-glucose = mogroside IV + UDP + H(+). It carries out the reaction mogroside III + UDP-alpha-D-glucose = siamenoside I + UDP + H(+). The catalysed reaction is mogroside IIIX + UDP-alpha-D-glucose = mogroside IVA + UDP + H(+). The enzyme catalyses mogroside IIIX + UDP-alpha-D-glucose = siamenoside I + UDP + H(+). It catalyses the reaction mogroside IV + UDP-alpha-D-glucose = mogroside V + UDP + H(+). It carries out the reaction siamenoside I + UDP-alpha-D-glucose = mogroside V + UDP + H(+). The catalysed reaction is mogroside V + UDP-alpha-D-glucose = mogroside VI + UDP + H(+). It functions in the pathway secondary metabolite biosynthesis; terpenoid biosynthesis. Activity is increased by Mg(2+). Its function is as follows. UDP-glycosyltransferase involved in the biosynthesis of cucurbitacin and mogroside tetracyclic triterpene natural products (e.g. siamenoside I and mogrosides IV, V and VI). Cucurbitacins have cytotoxic properties and exhibit deterrent taste as a defense barrier against herbivores. Mogrosides are nonsugar highly oxygenated compounds used as high-intensity zero-calorie sweeteners; they also possess pharmacological properties such as regulating immunity, lowering blood sugar and lipid levels, protecting the liver, and acting as antioxidants and antitumor agents. In terms of biological role, catalyzes the branched glucosylations of mogroside II-E, mogroside III, mogroside IIIx, mogroside IV, mogroside IV-A, siamenoside I and mogroside V, ending in the production of mogroside VI. Functionally, catalyzes the beta(1-6) branched glucosylations of mogroside II-E to produce mogroside IIIx by forming a beta(1-6) glycosidic bond with the 6-hydroxyl of glucose 1-C24; a subsequent glycosylation at glucose 1-C3 leads to the formation of mogroside IV-A with beta(1-6) glycosidic bond. Can also use mogroside III-E, mogroside III-A, mogroside IV-E and mogroside IV-A as substrates. This Siraitia grosvenorii (Monk's fruit) protein is Mogroside IIIx synthase.